Reading from the N-terminus, the 289-residue chain is Heterokaryon incompatibility protein S (289 aa).

Residues 1 to 227 are globular domain; it reads MSEPFEIVAG…KIDAIVGRNS (227 aa). Residues 218 to 289 are prion domain (PrD); sequence KIDAIVGRNS…EYGGKGFWDN (72 aa).

As to quaternary structure, homodimer. Forms heterodimers with het-s.

The protein localises to the cytoplasm. In terms of biological role, responsible for heterokaryon incompatibility, a process that ensures that during spontaneous, vegetative cell fusion only compatible cells from the same colony survive (non-self-recognition). Interaction with the prion form [het-s] of incompatible cells triggers a lethal reaction that prevents the formation of viable heterokaryons. The chain is Heterokaryon incompatibility protein S (het-S) from Podospora anserina (strain S / ATCC MYA-4624 / DSM 980 / FGSC 10383) (Pleurage anserina).